The following is a 171-amino-acid chain: Antimicrobial protein CAP18 (171 aa).

The first 29 residues, 1 to 29 (METHKHGPSLAWWSLLLLLLGLLMPPAIA), serve as a signal peptide directing secretion. Cystine bridges form between cysteine 85/cysteine 96 and cysteine 107/cysteine 124.

The protein belongs to the cathelicidin family. As to expression, neutrophils.

Its subcellular location is the secreted. Functionally, CAP18 binds to the lipid A moiety of bacterial lipopolysaccharides (LPS), a glycolipid present in the outer membrane of all Gram-negative bacteria. Has antibiotic activity. In Oryctolagus cuniculus (Rabbit), this protein is Antimicrobial protein CAP18 (CAP18).